Reading from the N-terminus, the 372-residue chain is DSC E3 ubiquitin ligase complex subunit 2 (372 aa).

5 helical membrane passes run 26–46, 54–74, 95–115, 126–146, and 160–180; these read VVAG…LHLL, ILLW…LFII, YMFI…SLLF, TFLI…TVFV, and VIPM…NAFL. A disordered region spans residues 246–314; sequence TENENQVENP…LPTGPASQLY (69 aa). Polar residues predominate over residues 249–268; sequence ENQVENPVSNADANDSPTRQ. Ser264 bears the Phosphoserine mark. A Phosphothreonine modification is found at Thr266. Residues 269-284 show a composition bias toward low complexity; the sequence is NARATAIASSSNTAAS. The segment covering 286–305 has biased composition (polar residues); sequence RNRQQISHPPLGRTSSSSVL. In terms of domain architecture, UBA spans 332 to 368; the sequence is EDINTVQTIMQTSRAQAIQALSQTNDVQRAVELLLEQ.

Component of the DSC E3 ubiquitin ligase complex composed of dsc1, dsc2, dsc3 and dsc4.

It localises to the golgi apparatus membrane. The catalysed reaction is S-ubiquitinyl-[E2 ubiquitin-conjugating enzyme]-L-cysteine + [acceptor protein]-L-lysine = [E2 ubiquitin-conjugating enzyme]-L-cysteine + N(6)-ubiquitinyl-[acceptor protein]-L-lysine.. It participates in protein modification; protein ubiquitination. In terms of biological role, component of the DSC E3 ubiquitin ligase complex which is required for the sre1 transcriptional activator proteolytic cleavage to release the soluble transcription factor from the membrane in low oxygen or sterol conditions. The complex also plays an important role in the multivesicular body (MVB) pathway and functions in a post-endoplasmic reticulum pathway for protein degradation. The protein is DSC E3 ubiquitin ligase complex subunit 2 (dsc2) of Schizosaccharomyces pombe (strain 972 / ATCC 24843) (Fission yeast).